Here is a 170-residue protein sequence, read N- to C-terminus: uncharacterized protein (170 aa).

The 160-residue stretch at 8–167 (LLIREFEFKD…DEYYYAILEE (160 aa)) folds into the N-acetyltransferase domain.

Belongs to the acetyltransferase family.

This is an uncharacterized protein from Bacillus subtilis (strain 168).